Here is a 252-residue protein sequence, read N- to C-terminus: 3-deoxy-manno-octulosonate cytidylyltransferase (252 aa).

The protein belongs to the KdsB family.

It is found in the cytoplasm. The enzyme catalyses 3-deoxy-alpha-D-manno-oct-2-ulosonate + CTP = CMP-3-deoxy-beta-D-manno-octulosonate + diphosphate. It participates in nucleotide-sugar biosynthesis; CMP-3-deoxy-D-manno-octulosonate biosynthesis; CMP-3-deoxy-D-manno-octulosonate from 3-deoxy-D-manno-octulosonate and CTP: step 1/1. Its pathway is bacterial outer membrane biogenesis; lipopolysaccharide biosynthesis. In terms of biological role, activates KDO (a required 8-carbon sugar) for incorporation into bacterial lipopolysaccharide in Gram-negative bacteria. In Rhodospirillum rubrum (strain ATCC 11170 / ATH 1.1.1 / DSM 467 / LMG 4362 / NCIMB 8255 / S1), this protein is 3-deoxy-manno-octulosonate cytidylyltransferase.